The chain runs to 282 residues: Elongation factor Ts (282 aa).

The interval 80-83 (TDFV) is involved in Mg(2+) ion dislocation from EF-Tu.

It belongs to the EF-Ts family.

It is found in the cytoplasm. Associates with the EF-Tu.GDP complex and induces the exchange of GDP to GTP. It remains bound to the aminoacyl-tRNA.EF-Tu.GTP complex up to the GTP hydrolysis stage on the ribosome. This chain is Elongation factor Ts, found in Chlamydia trachomatis serovar L2b (strain UCH-1/proctitis).